The chain runs to 682 residues: Penicillin-binding protein activator LpoA (682 aa).

Positions 1-26 (MLPLNSVRTHAGRLVPVMLAALFLAG) are cleaved as a signal peptide. A lipid anchor (N-palmitoyl cysteine) is attached at cysteine 27. Cysteine 27 is lipidated: S-diacylglycerol cysteine. 2 disordered regions span residues 240 to 262 (AKQLPSQLGGTPPAAAAPTTGET) and 314 to 341 (ANNAAAATPGAPAVPSPASSTPSAVSPT). The segment covering 248 to 262 (GGTPPAAAAPTTGET) has biased composition (low complexity).

This sequence belongs to the LpoA family. Interacts with PBP1a.

It localises to the cell outer membrane. In terms of biological role, regulator of peptidoglycan synthesis that is essential for the function of penicillin-binding protein 1A (PBP1a). This Dickeya chrysanthemi (strain Ech1591) (Dickeya zeae (strain Ech1591)) protein is Penicillin-binding protein activator LpoA.